The sequence spans 149 residues: Calmodulin (149 aa).

Alanine 2 is subject to N-acetylalanine. 4 EF-hand domains span residues 8-43 (EQIAEFKEAFSLFDKDGDGTITTKELGTVMRSLGQN), 44-79 (PTEAELQDMINEVDADGDGTIDFPEFLTMMARKMKD), 81-116 (DSEEEIREAFRVFDKDGDGFISAAELRHVMTNLGEK), and 117-149 (LTDEEVDEMIREADIDGDGQVNYEEFVKMMTSK). Residues aspartate 21, aspartate 23, aspartate 25, threonine 27, glutamate 32, aspartate 57, aspartate 59, aspartate 61, threonine 63, glutamate 68, aspartate 94, aspartate 96, aspartate 98, and glutamate 105 each contribute to the Ca(2+) site. An N6,N6,N6-trimethyllysine modification is found at lysine 116. Ca(2+) contacts are provided by aspartate 130, aspartate 132, aspartate 134, glutamine 136, and glutamate 141.

This sequence belongs to the calmodulin family.

Its function is as follows. Calmodulin mediates the control of a large number of enzymes, ion channels and other proteins by Ca(2+). Among the enzymes to be stimulated by the calmodulin-Ca(2+) complex are a number of protein kinases and phosphatases. This chain is Calmodulin, found in Renilla reniformis (Sea pansy).